Here is a 200-residue protein sequence, read N- to C-terminus: MYAYVKGKLTHLYPTHVVVETAGVGYEIQTPNSYRFQKHLDHEVLIHTSLIVREDAQLLYGFSSEEEKDMFLSLIKVTGIGPKSALAILATSTPNEVKRAIENENDTYLTKFPGIGKKTARQIVLDLKGKVKITEEDSDSLLQVDATSTVQDQFVQEAMLALEALGYSKRELAKVEKTLNKNKYDSVDEAVKAGLQLVVS.

Positions 1 to 63 are domain I; it reads MYAYVKGKLT…EDAQLLYGFS (63 aa). The domain II stretch occupies residues 64–142; that stretch reads SEEEKDMFLS…ITEEDSDSLL (79 aa). The flexible linker stretch occupies residues 143–149; it reads QVDATST. The segment at 150 to 200 is domain III; that stretch reads VQDQFVQEAMLALEALGYSKRELAKVEKTLNKNKYDSVDEAVKAGLQLVVS.

Belongs to the RuvA family. Homotetramer. Forms an RuvA(8)-RuvB(12)-Holliday junction (HJ) complex. HJ DNA is sandwiched between 2 RuvA tetramers; dsDNA enters through RuvA and exits via RuvB. An RuvB hexamer assembles on each DNA strand where it exits the tetramer. Each RuvB hexamer is contacted by two RuvA subunits (via domain III) on 2 adjacent RuvB subunits; this complex drives branch migration. In the full resolvosome a probable DNA-RuvA(4)-RuvB(12)-RuvC(2) complex forms which resolves the HJ.

It localises to the cytoplasm. The RuvA-RuvB-RuvC complex processes Holliday junction (HJ) DNA during genetic recombination and DNA repair, while the RuvA-RuvB complex plays an important role in the rescue of blocked DNA replication forks via replication fork reversal (RFR). RuvA specifically binds to HJ cruciform DNA, conferring on it an open structure. The RuvB hexamer acts as an ATP-dependent pump, pulling dsDNA into and through the RuvAB complex. HJ branch migration allows RuvC to scan DNA until it finds its consensus sequence, where it cleaves and resolves the cruciform DNA. The sequence is that of Holliday junction branch migration complex subunit RuvA from Staphylococcus aureus (strain USA300).